The sequence spans 482 residues: Caspase-8 (482 aa).

Positions 1-218 are excised as a propeptide; the sequence is MDFHSCLYDI…DMWDSPGEQE (218 aa). 2 consecutive DED domains span residues 2-80 and 100-177; these read DFHS…RVLK and AYRV…RIDD. Phosphoserine occurs at positions 188 and 213. Histidine 319 is a catalytic residue. Residue tyrosine 336 is modified to Phosphotyrosine. Residue cysteine 362 is part of the active site. Positions 379 to 388 are excised as a propeptide; that stretch reads LEQEHVLEED. Serine 390 bears the Phosphoserine; by CDK1 mark.

It belongs to the peptidase C14A family. In terms of assembly, heterotetramer that consists of two anti-parallel arranged heterodimers, each one formed by a 18 kDa (p18) and a 10 kDa (p10) subunit. Component of the death-induced signaling complex (DISC) composed of cell surface receptor FAS/CD95 or TNFRSF1A, adapter protein FADD and the CASP8 protease; recruitment of CASP8 to the complex is required for processing of CASP8 into the p18 and p10 subunits. Component of the AIM2 PANoptosome complex, a multiprotein complex that drives inflammatory cell death (PANoptosis). Interacts with CFLAR and PEA15. Interacts with RFFL and RNF34; negatively regulate CASP8 through proteasomal degradation. Interacts with TNFAIP8L2. Interacts with CASP8AP2. Interacts with NOL3; decreases CASP8 activity in a mitochondria localization- and phosphorylation-dependent manner and this interaction is dissociated by calcium. Interacts with UBR2. Interacts with RIPK1. Interacts with stimulated TNFRSF10B; this interaction is followed by CASP8 proteolytic cleavage and activation. Post-translationally, generation of the subunits requires association with the death-inducing signaling complex (DISC), whereas additional processing is likely due to the autocatalytic activity of the activated protease. GZMB and CASP10 can be involved in these processing events. Phosphorylation on Ser-389 during mitosis by CDK1 inhibits activation by proteolysis and prevents apoptosis. This phosphorylation occurs in cancer cell lines, as well as in primary breast tissues and lymphocytes.

It localises to the cytoplasm. Its subcellular location is the nucleus. It catalyses the reaction Strict requirement for Asp at position P1 and has a preferred cleavage sequence of (Leu/Asp/Val)-Glu-Thr-Asp-|-(Gly/Ser/Ala).. With respect to regulation, CASP8 activity is restricted by RIPK1. Its function is as follows. Thiol protease that plays a key role in programmed cell death by acting as a molecular switch for apoptosis, necroptosis and pyroptosis, and is required to prevent tissue damage during embryonic development and adulthood. Initiator protease that induces extrinsic apoptosis by mediating cleavage and activation of effector caspases responsible for FAS/CD95-mediated and TNFRSF1A-induced cell death. Cleaves and activates effector caspases CASP3, CASP4, CASP6, CASP7, CASP9 and CASP10. Binding to the adapter molecule FADD recruits it to either receptor FAS/CD95 or TNFRSF1A. The resulting aggregate called the death-inducing signaling complex (DISC) performs CASP8 proteolytic activation. The active dimeric enzyme is then liberated from the DISC and free to activate downstream apoptotic proteases. Proteolytic fragments of the N-terminal propeptide (termed CAP3, CAP5 and CAP6) are likely retained in the DISC. In addition to extrinsic apoptosis, also acts as a negative regulator of necroptosis: acts by cleaving RIPK1 at 'Asp-325', which is crucial to inhibit RIPK1 kinase activity, limiting TNF-induced apoptosis, necroptosis and inflammatory response. Also able to initiate pyroptosis by mediating cleavage and activation of gasdermin-C and -D (GSDMC and GSDMD, respectively): gasdermin cleavage promotes release of the N-terminal moiety that binds to membranes and forms pores, triggering pyroptosis. Initiates pyroptosis following inactivation of MAP3K7/TAK1. Also acts as a regulator of innate immunity by mediating cleavage and inactivation of N4BP1 downstream of TLR3 or TLR4, thereby promoting cytokine production. May participate in the Granzyme B (GZMB) cell death pathways. Cleaves PARP1 and PARP2. The chain is Caspase-8 from Rattus norvegicus (Rat).